Reading from the N-terminus, the 206-residue chain is Dihydrofolate reductase (206 aa).

One can recognise a DHFR domain in the interval S6–R204. NADP(+)-binding positions include A12 and G18–S24. E32 to K37 provides a ligand contact to substrate. R59–T61 contributes to the NADP(+) binding site. R75 is a substrate binding site. Residues T81 to N83 and G124 to A131 each bind NADP(+).

It belongs to the dihydrofolate reductase family.

It catalyses the reaction (6S)-5,6,7,8-tetrahydrofolate + NADP(+) = 7,8-dihydrofolate + NADPH + H(+). It participates in cofactor biosynthesis; tetrahydrofolate biosynthesis; 5,6,7,8-tetrahydrofolate from 7,8-dihydrofolate: step 1/1. Key enzyme in folate metabolism. Catalyzes an essential reaction for de novo glycine and purine synthesis, and for DNA precursor synthesis. This is Dihydrofolate reductase from Pneumocystis carinii.